The chain runs to 517 residues: Crotonobetaine/carnitine--CoA ligase (517 aa).

The protein belongs to the ATP-dependent AMP-binding enzyme family.

It catalyses the reaction 4-(trimethylamino)butanoate + ATP + CoA = 4-(trimethylamino)butanoyl-CoA + AMP + diphosphate. It carries out the reaction crotonobetaine + ATP + CoA = crotonobetainyl-CoA + AMP + diphosphate. The catalysed reaction is (R)-carnitine + ATP + CoA = (R)-carnitinyl-CoA + AMP + diphosphate. The protein operates within amine and polyamine metabolism; carnitine metabolism. In terms of biological role, catalyzes the transfer of CoA to carnitine, generating the initial carnitinyl-CoA needed for the CaiB reaction cycle. Also has activity toward crotonobetaine and gamma-butyrobetaine. This is Crotonobetaine/carnitine--CoA ligase from Escherichia coli O7:K1 (strain IAI39 / ExPEC).